A 431-amino-acid chain; its full sequence is Enolase (431 aa).

A (2R)-2-phosphoglycerate-binding site is contributed by Gln-167. The active-site Proton donor is Glu-209. 3 residues coordinate Mg(2+): Asp-246, Glu-290, and Asp-317. (2R)-2-phosphoglycerate contacts are provided by Lys-342, Arg-371, Ser-372, and Lys-393. The active-site Proton acceptor is Lys-342.

It belongs to the enolase family. Component of the RNA degradosome, a multiprotein complex involved in RNA processing and mRNA degradation. Mg(2+) is required as a cofactor.

It is found in the cytoplasm. Its subcellular location is the secreted. The protein resides in the cell surface. It carries out the reaction (2R)-2-phosphoglycerate = phosphoenolpyruvate + H2O. It participates in carbohydrate degradation; glycolysis; pyruvate from D-glyceraldehyde 3-phosphate: step 4/5. In terms of biological role, catalyzes the reversible conversion of 2-phosphoglycerate (2-PG) into phosphoenolpyruvate (PEP). It is essential for the degradation of carbohydrates via glycolysis. The protein is Enolase of Serratia proteamaculans (strain 568).